A 133-amino-acid chain; its full sequence is Probable mitochondrial pyruvate carrier 2 (133 aa).

A run of 3 helical transmembrane segments spans residues 39–55, 73–91, and 99–116; these read VTNL…IVPI, ASSL…TLIS, and MLAA…YNIY.

It belongs to the mitochondrial pyruvate carrier (MPC) (TC 2.A.105) family.

Its subcellular location is the mitochondrion inner membrane. In terms of biological role, may mediate the uptake of pyruvate into mitochondria. This Dictyostelium discoideum (Social amoeba) protein is Probable mitochondrial pyruvate carrier 2.